A 103-amino-acid chain; its full sequence is RNA-binding protein YlxQ (103 aa).

It belongs to the eukaryotic ribosomal protein eL8 family.

In terms of biological role, RNA-binding protein that recognizes the K-turn motif present in ribosomal RNA, but also in box C/D and box C'/D' sRNAs. The sequence is that of RNA-binding protein YlxQ from Enterococcus faecium (Streptococcus faecium).